The chain runs to 1033 residues: Isoleucine--tRNA ligase 2 (1033 aa).

Positions 47–57 match the 'HIGH' region motif; sequence PTANGLPHVGH. The short motif at 590–594 is the 'KMSKS' region element; the sequence is KMSKS. Lys-593 contributes to the ATP binding site.

The protein belongs to the class-I aminoacyl-tRNA synthetase family. IleS type 2 subfamily. In terms of assembly, monomer. Zn(2+) is required as a cofactor.

Its subcellular location is the cytoplasm. It carries out the reaction tRNA(Ile) + L-isoleucine + ATP = L-isoleucyl-tRNA(Ile) + AMP + diphosphate. In terms of biological role, catalyzes the attachment of isoleucine to tRNA(Ile). As IleRS can inadvertently accommodate and process structurally similar amino acids such as valine, to avoid such errors it has two additional distinct tRNA(Ile)-dependent editing activities. One activity is designated as 'pretransfer' editing and involves the hydrolysis of activated Val-AMP. The other activity is designated 'posttransfer' editing and involves deacylation of mischarged Val-tRNA(Ile). The sequence is that of Isoleucine--tRNA ligase 2 from Bacillus anthracis.